A 180-amino-acid chain; its full sequence is ATP-dependent protease subunit HslV (180 aa).

T6 is a catalytic residue. Na(+)-binding residues include A164, C167, and T170.

It belongs to the peptidase T1B family. HslV subfamily. A double ring-shaped homohexamer of HslV is capped on each side by a ring-shaped HslU homohexamer. The assembly of the HslU/HslV complex is dependent on binding of ATP.

Its subcellular location is the cytoplasm. The enzyme catalyses ATP-dependent cleavage of peptide bonds with broad specificity.. Allosterically activated by HslU binding. Protease subunit of a proteasome-like degradation complex believed to be a general protein degrading machinery. This chain is ATP-dependent protease subunit HslV, found in Borrelia hermsii (strain HS1 / DAH).